A 101-amino-acid polypeptide reads, in one-letter code: Protein S100-A3 (101 aa).

A2 is modified (N-acetylalanine). EF-hand domains follow at residues I12–P47 and F50–Y85. Ca(2+) is bound by residues K28 and E33. Cysteines 30 and 68 form a disulfide. At R51 the chain carries Citrulline; by PAD3. Residues D63, N65, D67, E69, and E74 each contribute to the Ca(2+) site. The cysteines at positions 81 and 99 are disulfide-linked. Zn(2+) contacts are provided by C83, C86, H87, and C93.

Belongs to the S-100 family. Homodimer and homotetramer for the citrullinated form. In terms of processing, more than half of the arginine residues undergo citrullination by PAD1 and PAD2. Arg-51 is specifically citrullinated by PAD3 and promotes tetramerization. As to expression, skin specific, specifically expressed at the inner endocuticle of hair fibers.

The protein resides in the cytoplasm. Its function is as follows. Binds both calcium and zinc. May be involved in calcium-dependent cuticle cell differentiation, hair shaft and hair cuticular barrier formation. In Homo sapiens (Human), this protein is Protein S100-A3 (S100A3).